The sequence spans 61 residues: uncharacterized protein (61 aa).

Positions 38 to 61 (TPRPFTPGLADPRRLGPRRVQAAQ) are disordered.

This is an uncharacterized protein from Homo sapiens (Human).